Here is a 367-residue protein sequence, read N- to C-terminus: Queuine tRNA-ribosyltransferase (367 aa).

Aspartate 89 (proton acceptor) is an active-site residue. Substrate-binding positions include 89–93 (DSGGF), aspartate 143, glutamine 187, and glycine 214. Positions 245 to 251 (GVGTPAD) are RNA binding. Aspartate 264 acts as the Nucleophile in catalysis. An RNA binding; important for wobble base 34 recognition region spans residues 269 to 273 (TRNAR). Residues cysteine 302, cysteine 304, cysteine 307, and histidine 333 each coordinate Zn(2+).

It belongs to the queuine tRNA-ribosyltransferase family. As to quaternary structure, homodimer. Within each dimer, one monomer is responsible for RNA recognition and catalysis, while the other monomer binds to the replacement base PreQ1. Zn(2+) is required as a cofactor.

The catalysed reaction is 7-aminomethyl-7-carbaguanine + guanosine(34) in tRNA = 7-aminomethyl-7-carbaguanosine(34) in tRNA + guanine. It participates in tRNA modification; tRNA-queuosine biosynthesis. Catalyzes the base-exchange of a guanine (G) residue with the queuine precursor 7-aminomethyl-7-deazaguanine (PreQ1) at position 34 (anticodon wobble position) in tRNAs with GU(N) anticodons (tRNA-Asp, -Asn, -His and -Tyr). Catalysis occurs through a double-displacement mechanism. The nucleophile active site attacks the C1' of nucleotide 34 to detach the guanine base from the RNA, forming a covalent enzyme-RNA intermediate. The proton acceptor active site deprotonates the incoming PreQ1, allowing a nucleophilic attack on the C1' of the ribose to form the product. After dissociation, two additional enzymatic reactions on the tRNA convert PreQ1 to queuine (Q), resulting in the hypermodified nucleoside queuosine (7-(((4,5-cis-dihydroxy-2-cyclopenten-1-yl)amino)methyl)-7-deazaguanosine). The sequence is that of Queuine tRNA-ribosyltransferase from Nitrosospira multiformis (strain ATCC 25196 / NCIMB 11849 / C 71).